A 449-amino-acid polypeptide reads, in one-letter code: Tryptophan synthase beta chain 2 (449 aa).

Lysine 116 carries the post-translational modification N6-(pyridoxal phosphate)lysine.

It belongs to the TrpB family. As to quaternary structure, tetramer of two alpha and two beta chains. It depends on pyridoxal 5'-phosphate as a cofactor.

The enzyme catalyses (1S,2R)-1-C-(indol-3-yl)glycerol 3-phosphate + L-serine = D-glyceraldehyde 3-phosphate + L-tryptophan + H2O. It participates in amino-acid biosynthesis; L-tryptophan biosynthesis; L-tryptophan from chorismate: step 5/5. Functionally, the beta subunit is responsible for the synthesis of L-tryptophan from indole and L-serine. This chain is Tryptophan synthase beta chain 2 (trpB2), found in Aeropyrum pernix (strain ATCC 700893 / DSM 11879 / JCM 9820 / NBRC 100138 / K1).